The following is a 506-amino-acid chain: Histidine ammonia-lyase (506 aa).

A cross-link (5-imidazolinone (Ala-Gly)) is located at residues 144–146; sequence ASG. Residue serine 145 is modified to 2,3-didehydroalanine (Ser).

The protein belongs to the PAL/histidase family. In terms of processing, contains an active site 4-methylidene-imidazol-5-one (MIO), which is formed autocatalytically by cyclization and dehydration of residues Ala-Ser-Gly.

The protein resides in the cytoplasm. The enzyme catalyses L-histidine = trans-urocanate + NH4(+). The protein operates within amino-acid degradation; L-histidine degradation into L-glutamate; N-formimidoyl-L-glutamate from L-histidine: step 1/3. This chain is Histidine ammonia-lyase, found in Legionella pneumophila (strain Paris).